A 1072-amino-acid polypeptide reads, in one-letter code: Carbamoyl phosphate synthase large chain (1072 aa).

Positions 1-401 (MPKRLDINTI…SLLKAVRSLE (401 aa)) are carboxyphosphate synthetic domain. Arg129, Arg169, Gly175, Gly176, Lys208, Ile210, Glu215, Gly241, Val242, His243, Gln284, and Glu298 together coordinate ATP. The ATP-grasp 1 domain occupies 133–327 (RTLMQDLNEP…IAKLAAKIAV (195 aa)). Gln284, Glu298, and Asn300 together coordinate Mg(2+). Residues Gln284, Glu298, and Asn300 each contribute to the Mn(2+) site. The segment at 402–546 (LGIYHLELDH…YSTYAEENES (145 aa)) is oligomerization domain. The tract at residues 547-929 (IVTDRKSVVV…ALYKGLVASG (383 aa)) is carbamoyl phosphate synthetic domain. The 191-residue stretch at 671-861 (EAALTKLGIP…MANVATKVIL (191 aa)) folds into the ATP-grasp 2 domain. 9 residues coordinate ATP: Arg707, Arg746, Glu752, Gly777, Val778, His779, Ser780, Gln820, and Glu832. Mg(2+) contacts are provided by Gln820, Glu832, and Asn834. Mn(2+) is bound by residues Gln820, Glu832, and Asn834. Residues 930 to 1072 (INIPTHGSVI…QTKRHEVVHA (143 aa)) enclose the MGS-like domain. The tract at residues 930-1072 (INIPTHGSVI…QTKRHEVVHA (143 aa)) is allosteric domain.

It belongs to the CarB family. In terms of assembly, composed of two chains; the small (or glutamine) chain promotes the hydrolysis of glutamine to ammonia, which is used by the large (or ammonia) chain to synthesize carbamoyl phosphate. Tetramer of heterodimers (alpha,beta)4. Mg(2+) serves as cofactor. Mn(2+) is required as a cofactor.

It carries out the reaction hydrogencarbonate + L-glutamine + 2 ATP + H2O = carbamoyl phosphate + L-glutamate + 2 ADP + phosphate + 2 H(+). The catalysed reaction is hydrogencarbonate + NH4(+) + 2 ATP = carbamoyl phosphate + 2 ADP + phosphate + 2 H(+). It participates in amino-acid biosynthesis; L-arginine biosynthesis; carbamoyl phosphate from bicarbonate: step 1/1. It functions in the pathway pyrimidine metabolism; UMP biosynthesis via de novo pathway; (S)-dihydroorotate from bicarbonate: step 1/3. Large subunit of the glutamine-dependent carbamoyl phosphate synthetase (CPSase). CPSase catalyzes the formation of carbamoyl phosphate from the ammonia moiety of glutamine, carbonate, and phosphate donated by ATP, constituting the first step of 2 biosynthetic pathways, one leading to arginine and/or urea and the other to pyrimidine nucleotides. The large subunit (synthetase) binds the substrates ammonia (free or transferred from glutamine from the small subunit), hydrogencarbonate and ATP and carries out an ATP-coupled ligase reaction, activating hydrogencarbonate by forming carboxy phosphate which reacts with ammonia to form carbamoyl phosphate. This is Carbamoyl phosphate synthase large chain from Bacillus cereus (strain ATCC 10987 / NRS 248).